A 93-amino-acid chain; its full sequence is MFKVNEYFDGTVKSIAFDMTAGPATIGVMAAGEYEFGTSQLEVMHVIAGALTVRLPGSDEWQNFASGSQFTVPANSKFQLKVAQDTAYLCEYR.

This sequence belongs to the nucleoside phosphorylase PpnP family.

It catalyses the reaction a purine D-ribonucleoside + phosphate = a purine nucleobase + alpha-D-ribose 1-phosphate. The enzyme catalyses adenosine + phosphate = alpha-D-ribose 1-phosphate + adenine. It carries out the reaction cytidine + phosphate = cytosine + alpha-D-ribose 1-phosphate. The catalysed reaction is guanosine + phosphate = alpha-D-ribose 1-phosphate + guanine. It catalyses the reaction inosine + phosphate = alpha-D-ribose 1-phosphate + hypoxanthine. The enzyme catalyses thymidine + phosphate = 2-deoxy-alpha-D-ribose 1-phosphate + thymine. It carries out the reaction uridine + phosphate = alpha-D-ribose 1-phosphate + uracil. The catalysed reaction is xanthosine + phosphate = alpha-D-ribose 1-phosphate + xanthine. Catalyzes the phosphorolysis of diverse nucleosides, yielding D-ribose 1-phosphate and the respective free bases. Can use uridine, adenosine, guanosine, cytidine, thymidine, inosine and xanthosine as substrates. Also catalyzes the reverse reactions. The chain is Pyrimidine/purine nucleoside phosphorylase from Pseudomonas paraeruginosa (strain DSM 24068 / PA7) (Pseudomonas aeruginosa (strain PA7)).